The following is a 141-amino-acid chain: Ribosome-binding factor A (141 aa).

It belongs to the RbfA family. As to quaternary structure, monomer. Binds 30S ribosomal subunits, but not 50S ribosomal subunits or 70S ribosomes.

The protein resides in the cytoplasm. In terms of biological role, one of several proteins that assist in the late maturation steps of the functional core of the 30S ribosomal subunit. Associates with free 30S ribosomal subunits (but not with 30S subunits that are part of 70S ribosomes or polysomes). Required for efficient processing of 16S rRNA. May interact with the 5'-terminal helix region of 16S rRNA. In Maricaulis maris (strain MCS10) (Caulobacter maris), this protein is Ribosome-binding factor A.